We begin with the raw amino-acid sequence, 182 residues long: Ribosome maturation factor RimM (182 aa).

Positions 101–174 constitute a PRC barrel domain; sequence QDEYFIHQLY…QIVVRLLPGL (74 aa).

The protein belongs to the RimM family. Binds ribosomal protein uS19.

It localises to the cytoplasm. In terms of biological role, an accessory protein needed during the final step in the assembly of 30S ribosomal subunit, possibly for assembly of the head region. Essential for efficient processing of 16S rRNA. May be needed both before and after RbfA during the maturation of 16S rRNA. It has affinity for free ribosomal 30S subunits but not for 70S ribosomes. The polypeptide is Ribosome maturation factor RimM (Roseiflexus sp. (strain RS-1)).